Reading from the N-terminus, the 100-residue chain is Large ribosomal subunit protein uL23 (100 aa).

Belongs to the universal ribosomal protein uL23 family. As to quaternary structure, part of the 50S ribosomal subunit. Contacts protein L29, and trigger factor when it is bound to the ribosome.

Functionally, one of the early assembly proteins it binds 23S rRNA. One of the proteins that surrounds the polypeptide exit tunnel on the outside of the ribosome. Forms the main docking site for trigger factor binding to the ribosome. The polypeptide is Large ribosomal subunit protein uL23 (Prochlorococcus marinus (strain MIT 9215)).